The primary structure comprises 393 residues: Transcription factor bHLH112 (393 aa).

Disordered stretches follow at residues 248–277 (TRAQSESLKRAKDNESAAKKPRVTTPSPLP) and 332–356 (KQGASNQQQQQISGKSKSQDENENH). Residues 254-265 (SLKRAKDNESAA) show a composition bias toward basic and acidic residues. The bHLH domain maps to 270 to 319 (VTTPSPLPTFKVRKENLRDQITSLQQLVSPFGKTDTASVLQEAIEYIKFL). The span at 332–347 (KQGASNQQQQQISGKS) shows a compositional bias: low complexity.

Homodimer.

It is found in the nucleus. The chain is Transcription factor bHLH112 (BHLH112) from Arabidopsis thaliana (Mouse-ear cress).